The following is a 185-amino-acid chain: Ribosome-recycling factor (185 aa).

This sequence belongs to the RRF family.

The protein localises to the cytoplasm. Functionally, responsible for the release of ribosomes from messenger RNA at the termination of protein biosynthesis. May increase the efficiency of translation by recycling ribosomes from one round of translation to another. The sequence is that of Ribosome-recycling factor from Streptomyces avermitilis (strain ATCC 31267 / DSM 46492 / JCM 5070 / NBRC 14893 / NCIMB 12804 / NRRL 8165 / MA-4680).